A 505-amino-acid chain; its full sequence is DDB1- and CUL4-associated factor 17 (505 aa).

The next 2 helical transmembrane spans lie at 186–206 (VLLY…ILEI) and 222–242 (GILI…QAII).

In terms of assembly, interacts with DDB1, CUL4A and CUL4B.

Its subcellular location is the membrane. The protein localises to the nucleus. The protein resides in the nucleolus. It functions in the pathway protein modification; protein ubiquitination. In terms of biological role, may function as a substrate receptor for CUL4-DDB1 E3 ubiquitin-protein ligase complex. The protein is DDB1- and CUL4-associated factor 17 (Dcaf17) of Rattus norvegicus (Rat).